Consider the following 272-residue polypeptide: MGRKRRVKSESSPFDSFPEDCISYIISFTNPRDACVAATVSKTFESTVKSDIIWEKFLPADYESLIPPSRVFSSKKELYFSLCNDPVLFDDDKKSVWLEKASGKRCLMLSAMNLSIIWGDNPQYWQWIPIPESRFEKVAKLRDVCWFEIRGRTNTRVLSPRTRYSAYIVFKGVDKCYGFQNVAIEAAVGVVGQEPSRRLICFSEAIRRGRRNVVKPKQREDGWMEIELGEFFNDGGIMDNDEIEMSALETKQLNRKCGLIIQGIEIRPAKIL.

One can recognise an F-box domain in the interval 11–57; it reads SSPFDSFPEDCISYIISFTNPRDACVAATVSKTFESTVKSDIIWEKF.

In terms of assembly, part of a SCF (ASK-cullin-F-box) protein ligase complex. Interacts with SKP1B/ASK2, ASK11 and ASK12.

It participates in protein modification; protein ubiquitination. Component of SCF(ASK-cullin-F-box) E3 ubiquitin ligase complexes, which may mediate the ubiquitination and subsequent proteasomal degradation of target proteins. This chain is F-box protein PP2-B10 (PP2B10), found in Arabidopsis thaliana (Mouse-ear cress).